The chain runs to 466 residues: Soluble pyridine nucleotide transhydrogenase (466 aa).

36–45 serves as a coordination point for FAD; it reads ERYQNVGGGC.

The protein belongs to the class-I pyridine nucleotide-disulfide oxidoreductase family. The cofactor is FAD.

It localises to the cytoplasm. It carries out the reaction NAD(+) + NADPH = NADH + NADP(+). Conversion of NADPH, generated by peripheral catabolic pathways, to NADH, which can enter the respiratory chain for energy generation. In Escherichia coli O127:H6 (strain E2348/69 / EPEC), this protein is Soluble pyridine nucleotide transhydrogenase.